Reading from the N-terminus, the 93-residue chain is Small ribosomal subunit protein uS19 (93 aa).

This sequence belongs to the universal ribosomal protein uS19 family.

Its function is as follows. Protein S19 forms a complex with S13 that binds strongly to the 16S ribosomal RNA. The sequence is that of Small ribosomal subunit protein uS19 from Anaplasma marginale (strain Florida).